The chain runs to 367 residues: NADH-quinone oxidoreductase subunit D (367 aa).

The protein belongs to the complex I 49 kDa subunit family. As to quaternary structure, NDH-1 is composed of 14 different subunits. Subunits NuoB, C, D, E, F, and G constitute the peripheral sector of the complex.

Its subcellular location is the cell inner membrane. The enzyme catalyses a quinone + NADH + 5 H(+)(in) = a quinol + NAD(+) + 4 H(+)(out). Functionally, NDH-1 shuttles electrons from NADH, via FMN and iron-sulfur (Fe-S) centers, to quinones in the respiratory chain. The immediate electron acceptor for the enzyme in this species is believed to be ubiquinone. Couples the redox reaction to proton translocation (for every two electrons transferred, four hydrogen ions are translocated across the cytoplasmic membrane), and thus conserves the redox energy in a proton gradient. This is NADH-quinone oxidoreductase subunit D from Thermosipho melanesiensis (strain DSM 12029 / CIP 104789 / BI429).